Reading from the N-terminus, the 206-residue chain is High frequency lysogenization protein HflD homolog (206 aa).

Belongs to the HflD family.

It is found in the cytoplasm. It localises to the cell inner membrane. The protein is High frequency lysogenization protein HflD homolog of Pseudomonas paraeruginosa (strain DSM 24068 / PA7) (Pseudomonas aeruginosa (strain PA7)).